A 493-amino-acid chain; its full sequence is Membrane-bound lytic murein transglycosylase F (493 aa).

A signal peptide spans 1–21 (MKRLRFNYLLIGLITVLLALA). The non-LT domain stretch occupies residues 22–268 (LWPSIPWYGG…RLDEKYLGHV (247 aa)). Residues 269–493 (GTFDYVDTRT…LNPVSALPLP (225 aa)) are LT domain. Residue glutamate 313 is part of the active site.

In the N-terminal section; belongs to the bacterial solute-binding protein 3 family. The protein in the C-terminal section; belongs to the transglycosylase Slt family.

Its subcellular location is the cell outer membrane. It carries out the reaction Exolytic cleavage of the (1-&gt;4)-beta-glycosidic linkage between N-acetylmuramic acid (MurNAc) and N-acetylglucosamine (GlcNAc) residues in peptidoglycan, from either the reducing or the non-reducing ends of the peptidoglycan chains, with concomitant formation of a 1,6-anhydrobond in the MurNAc residue.. In terms of biological role, murein-degrading enzyme that degrades murein glycan strands and insoluble, high-molecular weight murein sacculi, with the concomitant formation of a 1,6-anhydromuramoyl product. Lytic transglycosylases (LTs) play an integral role in the metabolism of the peptidoglycan (PG) sacculus. Their lytic action creates space within the PG sacculus to allow for its expansion as well as for the insertion of various structures such as secretion systems and flagella. This chain is Membrane-bound lytic murein transglycosylase F, found in Erwinia tasmaniensis (strain DSM 17950 / CFBP 7177 / CIP 109463 / NCPPB 4357 / Et1/99).